The following is a 405-amino-acid chain: MADVNKVVLAYSGGLDTSVILKWLQDTYNCEVVTFTADLGQGEEVEPARAKAQAMGVKEIYIDDLREEFVRDFVFPMFRANTVYEGEYLLGTSIARPLIAKRLIEIANETGADAISHGATGKGNDQVRFELGAYALKPGVKVIAPWREWDLLSREKLMDYAEKHNIPIERHGKKKSPYSMDANLLHISYEGGVLEDTWTEHEEDMWRWTKSPEDAPNVATYLELTYRNGDIVALDGVDMTPATVLATLNRIGGENGIGRLDIVENRYVGMKSRGCYETPGGTIMLRAHRAIESITLDREVAHLKDELMVKYASLIYTGYWWSPERLMLQQMIDASQVHVNGVVRLKLYKGNVIVTGRKSDDSLFDANIATFEDDAGAYDQADAAGFIKLNALRMRIAANKGRKLF.

ATP contacts are provided by residues 10 to 18 (AYSGGLDTS) and A37. L-citrulline-binding residues include Y88 and S93. G118 provides a ligand contact to ATP. L-aspartate is bound by residues T120, N124, and D125. N124 serves as a coordination point for L-citrulline. L-citrulline contacts are provided by R128, S179, S188, E264, and Y276.

This sequence belongs to the argininosuccinate synthase family. Type 1 subfamily. In terms of assembly, homotetramer.

The protein resides in the cytoplasm. The enzyme catalyses L-citrulline + L-aspartate + ATP = 2-(N(omega)-L-arginino)succinate + AMP + diphosphate + H(+). It participates in amino-acid biosynthesis; L-arginine biosynthesis; L-arginine from L-ornithine and carbamoyl phosphate: step 2/3. In Pseudomonas syringae pv. tomato (strain ATCC BAA-871 / DC3000), this protein is Argininosuccinate synthase.